Consider the following 216-residue polypeptide: Small ribosomal subunit protein uS5 (216 aa).

A disordered region spans residues 1–55; it reads MDRKLENQKDLLNQDPKVELNSQSVAKNPLNSREVKPIQRRRPLRKNSRDKNSKP. Polar residues predominate over residues 20 to 31; the sequence is LNSQSVAKNPLN. The 64-residue stretch at 57–120 folds into the S5 DRBM domain; sequence FEERVIAIHR…KDAQNRLVSV (64 aa).

This sequence belongs to the universal ribosomal protein uS5 family. In terms of assembly, part of the 30S ribosomal subunit. Contacts proteins S4 and S8.

Its function is as follows. With S4 and S12 plays an important role in translational accuracy. Located at the back of the 30S subunit body where it stabilizes the conformation of the head with respect to the body. In Mesomycoplasma hyopneumoniae (strain J / ATCC 25934 / NCTC 10110) (Mycoplasma hyopneumoniae), this protein is Small ribosomal subunit protein uS5.